The primary structure comprises 71 residues: DNA-directed RNA polymerase subunit omega (71 aa).

This sequence belongs to the RNA polymerase subunit omega family. As to quaternary structure, the RNAP catalytic core consists of 2 alpha, 1 beta/beta' and 1 omega subunit. When a sigma factor is associated with the core the holoenzyme is formed, which can initiate transcription.

It carries out the reaction RNA(n) + a ribonucleoside 5'-triphosphate = RNA(n+1) + diphosphate. In terms of biological role, promotes RNA polymerase assembly. Latches the N- and C-terminal regions of the beta' subunit thereby facilitating its interaction with the beta and alpha subunits. This Wolinella succinogenes (strain ATCC 29543 / DSM 1740 / CCUG 13145 / JCM 31913 / LMG 7466 / NCTC 11488 / FDC 602W) (Vibrio succinogenes) protein is DNA-directed RNA polymerase subunit omega.